The primary structure comprises 285 residues: Type II secretion system protein C (285 aa).

Residues 1-27 (MARLQAFKDPSFHSLVATFRSLPLIRR) lie on the Cytoplasmic side of the membrane. A helical membrane pass occupies residues 28-48 (FVLGLILLLICQQLAVLTWRF). Over 49 to 285 (LLPEDSRIVG…DIYLALDGDH (237 aa)) the chain is Periplasmic.

It belongs to the GSP C family.

The protein resides in the cell inner membrane. Functionally, involved in a type II secretion system (T2SS, formerly general secretion pathway, GSP) for the export of proteins. Required for the translocation of the multiple pectic enzymes. This is Type II secretion system protein C (outC) from Pectobacterium carotovorum subsp. carotovorum (Erwinia carotovora subsp. carotovora).